Reading from the N-terminus, the 198-residue chain is GTP-binding protein Di-Ras1 (198 aa).

Residues 17–22 (GVGKSS), 33–39 (RDTYIPT), 61–65 (DTTGS), 121–125 (NKCDE), alanine 151, and 151–152 (AK) contribute to the GTP site. The short motif at 36–44 (YIPTIEDTY) is the Effector region element. Cysteine methyl ester is present on cysteine 195. The S-geranylgeranyl cysteine moiety is linked to residue cysteine 195. Residues 196–198 (ALM) constitute a propeptide, removed in mature form.

Belongs to the small GTPase superfamily. Di-Ras family.

Its subcellular location is the cell membrane. Displays low GTPase activity and exists predominantly in the GTP-bound form. The sequence is that of GTP-binding protein Di-Ras1 (Diras1) from Mus musculus (Mouse).